The chain runs to 275 residues: Malonyl-[acyl-carrier protein] O-methyltransferase (275 aa).

The protein belongs to the methyltransferase superfamily.

The enzyme catalyses malonyl-[ACP] + S-adenosyl-L-methionine = malonyl-[ACP] methyl ester + S-adenosyl-L-homocysteine. Its pathway is cofactor biosynthesis; biotin biosynthesis. Functionally, converts the free carboxyl group of a malonyl-thioester to its methyl ester by transfer of a methyl group from S-adenosyl-L-methionine (SAM). It allows to synthesize pimeloyl-ACP via the fatty acid synthetic pathway. This is Malonyl-[acyl-carrier protein] O-methyltransferase from Methylococcus capsulatus (strain ATCC 33009 / NCIMB 11132 / Bath).